Consider the following 146-residue polypeptide: Hemoglobin subunit beta (146 aa).

An N-acetylvaline modification is found at valine 1. Residues 2–146 (HLTPEEKNAV…VANALAHKYH (145 aa)) enclose the Globin domain. Threonine 12 carries the post-translational modification Phosphothreonine. Serine 44 is subject to Phosphoserine. An N6-acetyllysine modification is found at lysine 59. Histidine 63 provides a ligand contact to heme b. Lysine 82 carries the N6-acetyllysine modification. Histidine 92 contacts heme b. Cysteine 93 is modified (S-nitrosocysteine). At lysine 144 the chain carries N6-acetyllysine.

The protein belongs to the globin family. As to quaternary structure, heterotetramer of two alpha chains and two beta chains. Red blood cells.

In terms of biological role, involved in oxygen transport from the lung to the various peripheral tissues. The chain is Hemoglobin subunit beta (HBB) from Macaca mulatta (Rhesus macaque).